The chain runs to 275 residues: Urease accessory protein UreD (275 aa).

This sequence belongs to the UreD family. UreD, UreF and UreG form a complex that acts as a GTP-hydrolysis-dependent molecular chaperone, activating the urease apoprotein by helping to assemble the nickel containing metallocenter of UreC. The UreE protein probably delivers the nickel.

It is found in the cytoplasm. In terms of biological role, required for maturation of urease via the functional incorporation of the urease nickel metallocenter. The sequence is that of Urease accessory protein UreD from Cereibacter sphaeroides (strain ATCC 17023 / DSM 158 / JCM 6121 / CCUG 31486 / LMG 2827 / NBRC 12203 / NCIMB 8253 / ATH 2.4.1.) (Rhodobacter sphaeroides).